The sequence spans 365 residues: Protein AC54 (365 aa).

Interacts with C42 and VP80. Interacts with protein 38K.

It is found in the virion. Functionally, structural protein that participates in nucleocapsid assembly. Plays an essential role in the proper localization of the major capsid protein VP39, and the minor capsid protein 38K into the capsid assembly site. This Lepidoptera (butterflies and moths) protein is Protein AC54 (AC54).